Here is a 147-residue protein sequence, read N- to C-terminus: Large ribosomal subunit protein uL13 (147 aa).

It belongs to the universal ribosomal protein uL13 family. In terms of assembly, part of the 50S ribosomal subunit.

Functionally, this protein is one of the early assembly proteins of the 50S ribosomal subunit, although it is not seen to bind rRNA by itself. It is important during the early stages of 50S assembly. The protein is Large ribosomal subunit protein uL13 of Streptomyces griseus subsp. griseus (strain JCM 4626 / CBS 651.72 / NBRC 13350 / KCC S-0626 / ISP 5235).